A 347-amino-acid polypeptide reads, in one-letter code: L-Ala-D/L-amino acid epimerase (347 aa).

Residue 156–158 (KLK) participates in substrate binding. Residues Asp-183, Glu-211, and Asp-237 each coordinate Mg(2+). Residues Lys-259 and 309-311 (DID) contribute to the substrate site.

The protein belongs to the mandelate racemase/muconate lactonizing enzyme family. The cofactor is Mg(2+).

In terms of biological role, dipeptide epimerase with a broad substrate specificity. Catalyzes the epimerization of L-Ala-L-Ala, L-Ala-L-Ser, L-Ala-L-Thr, L-Ala-L-Met, L-Ala-L-Phe, L-Ala-L-Tyr, L-Gly-L-Asp, L-Val-L-Asp, L-Val-L-Glu and L-Val-L-Phe (in vitro). Can also catalyze the epimerization of L-Ala-L-Glu, but with lower efficiency. The polypeptide is L-Ala-D/L-amino acid epimerase (Pedosphaera parvula (strain Ellin514)).